The sequence spans 182 residues: Large ribosomal subunit protein uL16 (182 aa).

The protein belongs to the universal ribosomal protein uL16 family.

The protein is Large ribosomal subunit protein uL16 of Thermococcus gammatolerans (strain DSM 15229 / JCM 11827 / EJ3).